The chain runs to 876 residues: Alanine--tRNA ligase (876 aa).

Residues H565, H569, C667, and H671 each coordinate Zn(2+).

It belongs to the class-II aminoacyl-tRNA synthetase family. Zn(2+) is required as a cofactor.

The protein resides in the cytoplasm. The catalysed reaction is tRNA(Ala) + L-alanine + ATP = L-alanyl-tRNA(Ala) + AMP + diphosphate. Functionally, catalyzes the attachment of alanine to tRNA(Ala) in a two-step reaction: alanine is first activated by ATP to form Ala-AMP and then transferred to the acceptor end of tRNA(Ala). Also edits incorrectly charged Ser-tRNA(Ala) and Gly-tRNA(Ala) via its editing domain. The polypeptide is Alanine--tRNA ligase (Staphylococcus aureus (strain Mu3 / ATCC 700698)).